The primary structure comprises 637 residues: DNA mismatch repair protein MutL (637 aa).

This sequence belongs to the DNA mismatch repair MutL/HexB family.

This protein is involved in the repair of mismatches in DNA. It is required for dam-dependent methyl-directed DNA mismatch repair. May act as a 'molecular matchmaker', a protein that promotes the formation of a stable complex between two or more DNA-binding proteins in an ATP-dependent manner without itself being part of a final effector complex. This Actinobacillus succinogenes (strain ATCC 55618 / DSM 22257 / CCUG 43843 / 130Z) protein is DNA mismatch repair protein MutL.